The following is a 221-amino-acid chain: Serine protease inhibitor 7 (221 aa).

The first 22 residues, 1–22 (MKCLFLLCLCLVPIVVFSSTFT), serve as a signal peptide directing secretion. Residues 23-28 (SKNPIN) constitute a propeptide that is removed on maturation. The short motif at 25 to 30 (NPINLP) is the Vacuolar targeting signal element. Intrachain disulfides connect Cys-76–Cys-125 and Cys-174–Cys-191.

Belongs to the protease inhibitor I3 (leguminous Kunitz-type inhibitor) family. Tubers. Not detected in root, stem, leaves or flower bud.

It localises to the vacuole. In terms of biological role, inhibitor of trypsin (serine protease). May protect the plant by inhibiting proteases of invading organisms. In Solanum tuberosum (Potato), this protein is Serine protease inhibitor 7.